The following is a 447-amino-acid chain: Nuclear envelope integral membrane protein 2 (447 aa).

The N-terminal stretch at 1 to 28 (MGPRRLPWARPGPALGLLLLALAGAVPA) is a signal peptide. 5 consecutive transmembrane segments (helical) span residues 144-164 (EMLDGKLLFLFAAGIFLFHFA), 173-193 (FFYLSGIILGVLALLVFVLLA), 202-222 (STFWILLSGCWMSSLYLIYCF), 235-255 (IYVLGYFVAVGTLSFATCYQH), and 275-295 (AFVFIYCGVNIPQVAYAIIAV). Positions 410 to 438 (TRTESEQDETTSYIHEGDDENEDEIHEPI) are disordered.

Belongs to the NEMP family.

It is found in the nucleus inner membrane. This Gallus gallus (Chicken) protein is Nuclear envelope integral membrane protein 2 (NEMP2).